Reading from the N-terminus, the 265-residue chain is uncharacterized protein (265 aa).

The interval 1–160 (MDKSKNLFDL…STEPVVAAPV (160 aa)) is disordered. A compositionally biased stretch (low complexity) spans 28 to 42 (AAAAPVAAKKPVAPK). Composition is skewed to basic and acidic residues over residues 73–85 (SEERQNTKRDSKS) and 102–119 (RQFDRKSGTGRPHNENKK).

It belongs to the SERBP1-HABP4 family.

Ribosome-binding protein that acts as a regulator of mRNA translation by promoting ribosome inactivation. This is an uncharacterized protein from Dictyostelium discoideum (Social amoeba).